Reading from the N-terminus, the 147-residue chain is Hemoglobin subunit epsilon-Y2 (147 aa).

One can recognise a Globin domain in the interval 3-147; the sequence is NFTAEEKTLI…VATALSHKYH (145 aa). Serine 51 carries the post-translational modification Phosphoserine. The heme b site is built by histidine 64 and histidine 93.

This sequence belongs to the globin family. In terms of tissue distribution, high expression in yolk sac blood islands, fetal liver, and embryonic erythrocytes. Very low levels in adult liver and spleen.

In terms of biological role, hemoglobin epsilon chain is a beta-type chain found in early embryos. The protein is Hemoglobin subunit epsilon-Y2 (Hbb-y) of Mus musculus (Mouse).